The primary structure comprises 435 residues: WD repeat domain phosphoinositide-interacting protein 2 (435 aa).

The WD 1 repeat unit spans residues 182–222; sequence AHDSPLAALAFDASGTKLATASEKGTVIRVFSIPEGQKLFE. A L/FRRG motif motif is present at residues 223–226; sequence FRRG. WD repeat units lie at residues 228–267 and 311–349; these read KRCVSICSLAFSMDSIFLSASSNTETVHIFKLETIKEKPP and GHKNICALATIQKISRLLVGAADGYLYIYNFDPQEGGEC. The segment at 386 to 435 is disordered; the sequence is VTKTYPPPSPTRHAYADDLGAVGGASEEDEMGNLRLDEDNENPPMILQTE.

The protein belongs to the WD repeat PROPPIN family.

The protein resides in the preautophagosomal structure membrane. Component of the autophagy machinery that controls the major intracellular degradation process by which cytoplasmic materials are packaged into autophagosomes and delivered to lysosomes for degradation. Involved in an early step of the formation of preautophagosomal structures. In Xenopus laevis (African clawed frog), this protein is WD repeat domain phosphoinositide-interacting protein 2 (wipi2).